An 840-amino-acid polypeptide reads, in one-letter code: MAGKRKARDEEFIFTLSDEETPYINGGDFDEEDDDVAPSINKSKNTKTLKSRVEPSSKKRRNEESTTGHQNKKLKQQEQGQQKGLKGKRAIANGWDAENDSNGSGEDEEEEEDEEGEEGLLDSDFEFDIGGATNIGLVEEFDGWGAEDRDKQGNMGEAKKGVDLDEILCRRRQKKLESQEKKTREAAKSNVDDSFEGLSDDDGHNEDENEDNEMPNFDDDELLAPDAFGMGAEGESDEQGKANADKGSDDESMPDANGADEEDASDSDSVASPVAHPDDLRSDESSDSEEEDPEEVAKRNAFFAPEENPTKSEETSSNSTFQNFNLSRPILRGLAAVGFSAPTPIQRKAIPVGLLGKDLVGGAVTGSGKTAAFIIPILERLLYRPRKVPTSRVAILMPTRELAVQCYNVATKLATYTDITFCQLVGGFSLREQENVLKQRPDVIIATPGRFIDHMRNSASFTVDTLEILVLDEADRMLEDGFADELNEILNTIPKSRQTMLFSATMTDSVDKLIRVGLNRPVRLMVDSKKHTVGTLVQEFVRLRPGREGKRMGYLVLLCNTIYTNRVIVFFRQKKEAHRARIIFGLLGLKAAELHGSMSQEQRINAVEAFRDGKVPFLLATDLASRGLDIKGVESVINYEAPQSHEIYLHRVGRTARAGRSGRACTIAAEPDRKVVKAAVKAGRAQGAKIVSRVVDPAVADEWASKVEEMQAEIEDILKEEKEEKQLAQAEMQVKRGQNLIKHGSEIMARPKRTWFETEREKREAKKRALSELNGPDSVIKKEKRKLSGKEKKKLDDNRLREEGKIWKKGKKERESKGDMRSQGKGKAKKDKVKAKKAAR.

Disordered regions lie at residues 1–133 and 146–321; these read MAGK…GGAT and AEDR…NSTF. Residues 51–66 show a composition bias toward basic and acidic residues; that stretch reads SRVEPSSKKRRNEEST. Residues 105–127 are compositionally biased toward acidic residues; it reads GEDEEEEEDEEGEEGLLDSDFEF. Residues 146 to 191 are compositionally biased toward basic and acidic residues; sequence AEDRDKQGNMGEAKKGVDLDEILCRRRQKKLESQEKKTREAAKSNV. Over residues 193–223 the composition is skewed to acidic residues; that stretch reads DSFEGLSDDDGHNEDENEDNEMPNFDDDELL. Positions 238-249 are enriched in basic and acidic residues; the sequence is EQGKANADKGSD. 2 stretches are compositionally biased toward acidic residues: residues 250–266 and 285–294; these read DESMPDANGADEEDASD and SSDSEEEDPE. Residues 319-347 carry the Q motif motif; it reads STFQNFNLSRPILRGLAAVGFSAPTPIQR. Positions 350-524 constitute a Helicase ATP-binding domain; that stretch reads IPVGLLGKDL…RVGLNRPVRL (175 aa). 363–370 is an ATP binding site; sequence AVTGSGKT. Residues 472-475 carry the DEAD box motif; the sequence is DEAD. A Helicase C-terminal domain is found at 554-733; it reads YLVLLCNTIY…EKQLAQAEMQ (180 aa). Residues 766–840 form a disordered region; it reads KKRALSELNG…DKVKAKKAAR (75 aa). Basic and acidic residues predominate over residues 786 to 822; that stretch reads KLSGKEKKKLDDNRLREEGKIWKKGKKERESKGDMRS. Residues 824-840 are compositionally biased toward basic residues; the sequence is GKGKAKKDKVKAKKAAR.

This sequence belongs to the DEAD box helicase family. DDX27/DRS1 subfamily. As to quaternary structure, associates with pre-ribosomal particles.

The protein resides in the nucleus. It is found in the nucleolus. It carries out the reaction ATP + H2O = ADP + phosphate + H(+). Functionally, ATP-binding RNA helicase involved in ribosome assembly. This is ATP-dependent RNA helicase DRS1 (DRS1) from Coccidioides immitis (strain RS) (Valley fever fungus).